The primary structure comprises 197 residues: Chalcone--flavanone isomerase 2 (197 aa).

Positions 23, 88, and 165 each coordinate substrate.

It belongs to the chalcone isomerase family.

The catalysed reaction is a chalcone = a flavanone.. The protein operates within secondary metabolite biosynthesis; flavonoid biosynthesis. Its function is as follows. Catalyzes the intramolecular cyclization of bicyclic chalcones into tricyclic (S)-flavanones. Responsible for the isomerization of 4,2',4',6'-tetrahydroxychalcone (also termed chalcone) into naringenin. This Medicago sativa (Alfalfa) protein is Chalcone--flavanone isomerase 2 (CHI2).